Here is a 693-residue protein sequence, read N- to C-terminus: Polyribonucleotide nucleotidyltransferase (693 aa).

Residues Asp489 and Asp495 each contribute to the Mg(2+) site. The KH domain occupies 556-615 (PQIHVMNINPAKIKDVVGRGGATVKGIVEKTGAQIDTSDSGEVKVFAKDKKSMDMAVAMI). Residues 625 to 693 (GQVYKGKIVK…GRVKLSLVAR (69 aa)) enclose the S1 motif domain.

This sequence belongs to the polyribonucleotide nucleotidyltransferase family. In terms of assembly, component of the RNA degradosome, which is a multiprotein complex involved in RNA processing and mRNA degradation. The cofactor is Mg(2+).

It is found in the cytoplasm. It carries out the reaction RNA(n+1) + phosphate = RNA(n) + a ribonucleoside 5'-diphosphate. In terms of biological role, involved in mRNA degradation. Catalyzes the phosphorolysis of single-stranded polyribonucleotides processively in the 3'- to 5'-direction. This chain is Polyribonucleotide nucleotidyltransferase, found in Francisella tularensis subsp. novicida (strain U112).